The following is a 406-amino-acid chain: Imidazolonepropionase (406 aa).

Positions 65 and 67 each coordinate Fe(3+). Residues His-65 and His-67 each coordinate Zn(2+). 4-imidazolone-5-propanoate contacts are provided by Arg-74, Tyr-137, and His-170. An N-formimidoyl-L-glutamate-binding site is contributed by Tyr-137. Fe(3+) is bound at residue His-235. His-235 is a binding site for Zn(2+). Gln-238 contacts 4-imidazolone-5-propanoate. Residue Asp-310 coordinates Fe(3+). Asp-310 lines the Zn(2+) pocket. N-formimidoyl-L-glutamate is bound by residues Asn-312 and Gly-314. Thr-315 contacts 4-imidazolone-5-propanoate.

Belongs to the metallo-dependent hydrolases superfamily. HutI family. Zn(2+) is required as a cofactor. Requires Fe(3+) as cofactor.

It is found in the cytoplasm. The enzyme catalyses 4-imidazolone-5-propanoate + H2O = N-formimidoyl-L-glutamate. The protein operates within amino-acid degradation; L-histidine degradation into L-glutamate; N-formimidoyl-L-glutamate from L-histidine: step 3/3. Functionally, catalyzes the hydrolytic cleavage of the carbon-nitrogen bond in imidazolone-5-propanoate to yield N-formimidoyl-L-glutamate. It is the third step in the universal histidine degradation pathway. This is Imidazolonepropionase from Vibrio vulnificus (strain YJ016).